We begin with the raw amino-acid sequence, 328 residues long: tRNA-modifying protein YgfZ (328 aa).

Folate is bound by residues W28 and W190.

It belongs to the tRNA-modifying YgfZ family.

The protein resides in the cytoplasm. Its function is as follows. Folate-binding protein involved in regulating the level of ATP-DnaA and in the modification of some tRNAs. It is probably a key factor in regulatory networks that act via tRNA modification, such as initiation of chromosomal replication. The polypeptide is tRNA-modifying protein YgfZ (Sodalis glossinidius (strain morsitans)).